The primary structure comprises 344 residues: Phenylalanine--tRNA ligase alpha subunit (344 aa).

E256 contributes to the Mg(2+) binding site.

The protein belongs to the class-II aminoacyl-tRNA synthetase family. Phe-tRNA synthetase alpha subunit type 1 subfamily. Tetramer of two alpha and two beta subunits. Requires Mg(2+) as cofactor.

The protein localises to the cytoplasm. The catalysed reaction is tRNA(Phe) + L-phenylalanine + ATP = L-phenylalanyl-tRNA(Phe) + AMP + diphosphate + H(+). This Halalkalibacterium halodurans (strain ATCC BAA-125 / DSM 18197 / FERM 7344 / JCM 9153 / C-125) (Bacillus halodurans) protein is Phenylalanine--tRNA ligase alpha subunit (pheS).